A 314-amino-acid polypeptide reads, in one-letter code: Tudor-interacting repair regulator protein (314 aa).

A lipid anchor (N-myristoyl glycine) is attached at G2.

Belongs to the Nudix hydrolase family. TIRR subfamily. In terms of assembly, interacts (via the cytoplasmic part) with syndecan-4 (SDC4), but not with other syndecan proteins. Myristoylated in vitro; additional evidence is however required to confirm myristoylation in vivo. In terms of tissue distribution, ubiquitously expressed. Expressed in embryonic brain, eyes, gizzard, heart, intestine, kidney, liver, tibia and skin.

It is found in the nucleus. It localises to the cytoplasm. Its subcellular location is the cytoskeleton. The protein resides in the cell membrane. The protein localises to the cell junction. It is found in the focal adhesion. Key regulator of TP53BP1 required to stabilize TP53BP1 and regulate its recruitment to chromatin. This is Tudor-interacting repair regulator protein (NUDT16L1) from Gallus gallus (Chicken).